The chain runs to 86 residues: U-myrmeciitoxin(01)-Mg1a (86 aa).

A signal peptide spans 1 to 26 (MKLLYLLLTLAIIFVLTIVHAPNVEA). Positions 27–52 (KALADPESDAVGFADAFGDADAEATG) are excised as a propeptide. Leu-85 carries the leucine amide modification.

Belongs to the formicidae venom precursor-01 superfamily. As to expression, expressed by the venom gland. This toxin is detected along the entire venom gland, as well as in the venom reservoir, the venom duct and in the venom. No toxin are detected in the Dufour's gland.

It localises to the secreted. It is found in the target cell membrane. In terms of biological role, toxin that may interact with target cell membranes, producing a concentration-dependent leak in ion conductance, possibly via multimeric pore formation. It produces an immediate sharp increase of calcium concentration in all DRG neurons. This influx in calcium stabilizes without resulting in any observable dye leakage, showing that the effect is not simply cytolytic. This toxin may be one of the major contributors to the pain associated with envenomation. The toxin also displays a weak cytotoxicity (on HEK cells) and some antimicrobial activity (MIC=2.5 uM on C.neoformans (var. grubii), MIC=10.2 uM on S.aureus), but is not hemolytic to human erythtrocytes. In vivo, intraplantar injection into mice causes spontaneous nocifensive behavior (licking, flinching, or shaking of the paw), which lasts 5-7 minutes (10 and 100 uM tested). Mechanical and heat hypoalgesia are observed at 20 and 25 minutes after injection (highest dose tested of 100 uM). In vivo, injection into crickets (A.domesticus) causes an immediate, dose-dependent, reversible and nonlethal incapacitation that lasts about 53 minutes at the highest dose tested (60 ug/g). The polypeptide is U-myrmeciitoxin(01)-Mg1a (Myrmecia gulosa (Red bulldog ant)).